A 279-amino-acid polypeptide reads, in one-letter code: uncharacterized protein (279 aa).

Belongs to the PhzF family.

This is an uncharacterized protein from Vibrio cholerae serotype O1 (strain ATCC 39315 / El Tor Inaba N16961).